The sequence spans 710 residues: Pentatricopeptide repeat-containing protein At1g02060, chloroplastic (710 aa).

Residues 1–21 constitute a chloroplast transit peptide; it reads MVSSVPKLHALFVSKSQPVLR. PPR repeat units lie at residues 137-171, 172-202, 208-242, 243-277, 280-314, 315-351, 352-386, 387-421, 429-459, 463-497, 498-532, and 533-567; these read QDRY…GISP, SVLT…MRRT, DSYT…HCNP, DVVT…ATDV, NVVS…GLKP, NAVT…TFAP, DACT…KLHP, DSAS…EVLL, LAAA…LMKR, DPPS…EFVP, DLET…SYLP, and VATT…RIRQ.

Belongs to the PPR family. P subfamily.

It is found in the plastid. The protein resides in the chloroplast. In Arabidopsis thaliana (Mouse-ear cress), this protein is Pentatricopeptide repeat-containing protein At1g02060, chloroplastic.